Here is a 357-residue protein sequence, read N- to C-terminus: Peptide chain release factor 1 (357 aa).

Position 233 is an N5-methylglutamine (Gln233).

The protein belongs to the prokaryotic/mitochondrial release factor family. Post-translationally, methylated by PrmC. Methylation increases the termination efficiency of RF1.

The protein localises to the cytoplasm. Functionally, peptide chain release factor 1 directs the termination of translation in response to the peptide chain termination codons UAG and UAA. The polypeptide is Peptide chain release factor 1 (Syntrophus aciditrophicus (strain SB)).